We begin with the raw amino-acid sequence, 213 residues long: Orotate phosphoribosyltransferase (213 aa).

Lysine 26 contacts 5-phospho-alpha-D-ribose 1-diphosphate. 34 to 35 contributes to the orotate binding site; it reads FF. 5-phospho-alpha-D-ribose 1-diphosphate contacts are provided by residues 72–73, arginine 99, lysine 100, lysine 103, histidine 105, and 124–132; these read YK and DDVITAGTA. Orotate-binding residues include threonine 128 and arginine 156.

It belongs to the purine/pyrimidine phosphoribosyltransferase family. PyrE subfamily. In terms of assembly, homodimer. Requires Mg(2+) as cofactor.

It catalyses the reaction orotidine 5'-phosphate + diphosphate = orotate + 5-phospho-alpha-D-ribose 1-diphosphate. Its pathway is pyrimidine metabolism; UMP biosynthesis via de novo pathway; UMP from orotate: step 1/2. Its function is as follows. Catalyzes the transfer of a ribosyl phosphate group from 5-phosphoribose 1-diphosphate to orotate, leading to the formation of orotidine monophosphate (OMP). The protein is Orotate phosphoribosyltransferase of Escherichia coli O139:H28 (strain E24377A / ETEC).